Here is a 242-residue protein sequence, read N- to C-terminus: Small ribosomal subunit protein uS2 (242 aa).

Belongs to the universal ribosomal protein uS2 family.

This is Small ribosomal subunit protein uS2 from Aliivibrio fischeri (strain ATCC 700601 / ES114) (Vibrio fischeri).